We begin with the raw amino-acid sequence, 343 residues long: Acetylglutamate kinase (343 aa).

Residues 98–99 (GG), Arg-120, and Asn-219 contribute to the substrate site.

This sequence belongs to the acetylglutamate kinase family. ArgB subfamily.

The protein resides in the cytoplasm. The enzyme catalyses N-acetyl-L-glutamate + ATP = N-acetyl-L-glutamyl 5-phosphate + ADP. The protein operates within amino-acid biosynthesis; L-arginine biosynthesis; N(2)-acetyl-L-ornithine from L-glutamate: step 2/4. In terms of biological role, catalyzes the ATP-dependent phosphorylation of N-acetyl-L-glutamate. This is Acetylglutamate kinase from Frankia alni (strain DSM 45986 / CECT 9034 / ACN14a).